Consider the following 210-residue polypeptide: MQVKNPILGLCQKAKFALSAAKVEQCPDDQGYEVAFAGRSNAGKSSALNTLTHASLARTSKTPGRTQLLNFFSLDDERRLVDLPGYGYAKVPIPLKQHWQKHLEAYLGSRECLRGVILMMDVRHPMTDFDKMMLDWAKASSMPMHILLTKADKLTHGAGKNTLLKVQSEIRKGWGDGVTIQLFSAPKRLGVEDAYRVLADWMELEDKPVV.

In terms of domain architecture, EngB-type G spans 30–204 (QGYEVAFAGR…YRVLADWMEL (175 aa)). GTP is bound by residues 38-45 (GRSNAGKS), 64-68 (GRTQL), 82-85 (DLPG), 149-152 (TKAD), and 182-185 (LFSA). Residues serine 45 and threonine 66 each contribute to the Mg(2+) site.

The protein belongs to the TRAFAC class TrmE-Era-EngA-EngB-Septin-like GTPase superfamily. EngB GTPase family. Requires Mg(2+) as cofactor.

Functionally, necessary for normal cell division and for the maintenance of normal septation. The chain is Probable GTP-binding protein EngB from Pseudomonas putida (strain ATCC 47054 / DSM 6125 / CFBP 8728 / NCIMB 11950 / KT2440).